The following is a 382-amino-acid chain: Lysophosphatidylserine lipase ABHD12 (382 aa).

The segment covering 1–12 (MRKRKGSADHDS) has biased composition (basic and acidic residues). The disordered stretch occupies residues 1 to 45 (MRKRKGSADHDSSFTATLTDGSSDLKQCHKGTDADTDPGGSGKEM). Residues 1–60 (MRKRKGSADHDSSFTATLTDGSSDLKQCHKGTDADTDPGGSGKEMGRRCRRGGLMWRLRR) are Cytoplasmic-facing. Over residues 13-25 (SFTATLTDGSSDL) the composition is skewed to polar residues. The chain crosses the membrane as a helical span at residues 61-81 (ILIWLLGIYIAIPVIIKVCPS). The Extracellular segment spans residues 82–382 (IQAKLVFLNF…DFLRAPHPHG (301 aa)). Asparagine 109 is a glycosylation site (N-linked (GlcNAc...) asparagine). Residue serine 232 is the Nucleophile of the active site. Catalysis depends on charge relay system residues aspartate 319 and histidine 358.

Belongs to the serine esterase family. As to expression, ubiquitously expressed in adult tissues.

It is found in the endoplasmic reticulum membrane. The enzyme catalyses 1-(9Z-octadecenoyl)-sn-glycero-3-phospho-L-serine + H2O = sn-glycero-3-phospho-L-serine + (9Z)-octadecenoate + H(+). It catalyses the reaction 1-(9Z-octadecenoyl)-sn-glycero-3-phospho-(1'-sn-glycerol) + H2O = sn-glycero-3-phospho-(1'-sn-glycerol) + (9Z)-octadecenoate + H(+). It carries out the reaction 1-(9Z-octadecenoyl)-sn-glycero-3-phospho-(1D-myo-inositol) + H2O = sn-glycero-3-phospho-1D-myo-inositol + (9Z)-octadecenoate + H(+). The catalysed reaction is 1-(9Z-octadecenoyl)-sn-glycero-3-phosphoethanolamine + H2O = sn-glycero-3-phosphoethanolamine + (9Z)-octadecenoate + H(+). The enzyme catalyses 1-(9Z-octadecenoyl)-sn-glycero-3-phosphocholine + H2O = 1-(9Z-octadecenoyl)-sn-glycerol + phosphocholine + H(+). It catalyses the reaction 2-(9Z-octadecenoyl)-glycerol + H2O = glycerol + (9Z)-octadecenoate + H(+). It carries out the reaction 1-hexadecanoyl-sn-glycero-3-phospho-L-serine + H2O = sn-glycero-3-phospho-L-serine + hexadecanoate + H(+). The catalysed reaction is 2-(5Z,8Z,11Z,14Z-eicosatetraenoyl)-glycerol + H2O = glycerol + (5Z,8Z,11Z,14Z)-eicosatetraenoate + H(+). The enzyme catalyses Hydrolyzes glycerol monoesters of long-chain fatty acids.. It catalyses the reaction 1-decanoylglycerol + H2O = decanoate + glycerol + H(+). It carries out the reaction 1-dodecanoylglycerol + H2O = dodecanoate + glycerol + H(+). The catalysed reaction is 1-tetradecanoylglycerol + H2O = tetradecanoate + glycerol + H(+). The enzyme catalyses 2-hexadecanoylglycerol + H2O = glycerol + hexadecanoate + H(+). It catalyses the reaction 1-(9Z-octadecenoyl)-glycerol + H2O = glycerol + (9Z)-octadecenoate + H(+). It carries out the reaction 2-(9Z,12Z-octadecadienoyl)-glycerol + H2O = (9Z,12Z)-octadecadienoate + glycerol + H(+). The catalysed reaction is 1-(5Z,8Z,11Z,14Z-eicosatetraenoyl)-glycerol + H2O = glycerol + (5Z,8Z,11Z,14Z)-eicosatetraenoate + H(+). The enzyme catalyses 1-(9Z,12Z-octadecadienoyl)-glycerol + H2O = (9Z,12Z)-octadecadienoate + glycerol + H(+). It catalyses the reaction 1-hexadecanoylglycerol + H2O = glycerol + hexadecanoate + H(+). It carries out the reaction 1-octadecanoylglycerol + H2O = octadecanoate + glycerol + H(+). The catalysed reaction is 1-octadecanoyl-2-(9,10-epoxyoctadecanoyl)-sn-glycero-3-phospho-L-serine + H2O = 9,10-epoxyoctadecanoate + 1-octadecanoyl-sn-glycero-3-phosphoserine + H(+). The enzyme catalyses 1-octadecanoyl-2-(10-hydroxyoctadecanoyl)-sn-glycero-3-phospho-L-serine + H2O = 1-octadecanoyl-sn-glycero-3-phosphoserine + 10-hydroxyoctadecanoate + H(+). It catalyses the reaction 1-hexadecanoyl-2-(10-hydroxyoctadecanoyl)-sn-glycero-3-phospho-L-serine + H2O = 10-hydroxyoctadecanoate + 1-hexadecanoyl-sn-glycero-3-phospho-L-serine + H(+). In terms of biological role, lysophosphatidylserine (LPS) lipase that mediates the hydrolysis of lysophosphatidylserine, a class of signaling lipids that regulates immunological and neurological processes. Represents a major lysophosphatidylserine lipase in the brain, thereby playing a key role in the central nervous system. Also able to hydrolyze oxidized phosphatidylserine; oxidized phosphatidylserine is produced in response to severe inflammatory stress and constitutes a proapoptotic 'eat me' signal. Also has monoacylglycerol (MAG) lipase activity: hydrolyzes 2-arachidonoylglycerol (2-AG), thereby acting as a regulator of endocannabinoid signaling pathways. Has a strong preference for very-long-chain lipid substrates; substrate specificity is likely due to improved catalysis and not improved substrate binding. This chain is Lysophosphatidylserine lipase ABHD12, found in Danio rerio (Zebrafish).